The primary structure comprises 347 residues: Phenylalanine--tRNA ligase alpha subunit (347 aa).

Glutamate 261 is a Mg(2+) binding site.

This sequence belongs to the class-II aminoacyl-tRNA synthetase family. Phe-tRNA synthetase alpha subunit type 1 subfamily. In terms of assembly, tetramer of two alpha and two beta subunits. The cofactor is Mg(2+).

It localises to the cytoplasm. The enzyme catalyses tRNA(Phe) + L-phenylalanine + ATP = L-phenylalanyl-tRNA(Phe) + AMP + diphosphate + H(+). This is Phenylalanine--tRNA ligase alpha subunit from Streptococcus uberis (strain ATCC BAA-854 / 0140J).